Consider the following 295-residue polypeptide: bZIP transcription factor RISBZ5 (295 aa).

A compositionally biased stretch (basic and acidic residues) spans 16-26 (REEAGAGDRKP). Positions 16-157 (REEAGAGDRK…ARRSRRRKQA (142 aa)) are disordered. Acidic residues predominate over residues 109–119 (SDSDSDCDSLL). Positions 120–136 (EAERSPRLRGTKSTETK) are enriched in basic and acidic residues. A bZIP domain is found at 134 to 197 (ETKRIRRMVS…NTAVTDNRIL (64 aa)). Positions 136–155 (KRIRRMVSNRESARRSRRRK) are basic motif. Positions 162–176 (LESQVEQLKGENSSL) are leucine-zipper.

In terms of assembly, homodimer.

It localises to the nucleus. Its function is as follows. Probable transcription factor that binds to the DNA specific sequence 5'-TGAGTCA-3' found in seed storage protein gene promoters. May function as a negative regulator in cold and drought stress responses. In Oryza sativa subsp. japonica (Rice), this protein is bZIP transcription factor RISBZ5.